The following is a 60-amino-acid chain: Beta-defensin 11 (60 aa).

The signal sequence occupies residues 1-22 (MRLHHLLLALLFLVLSAGSGIS). Disulfide bonds link Cys-27–Cys-56, Cys-34–Cys-49, and Cys-39–Cys-57.

The protein belongs to the beta-defensin family. In terms of tissue distribution, neutrophilic granules.

The protein resides in the secreted. Functionally, has bactericidal activity. Active against E.coli ML35 and S.aureus 502A. The sequence is that of Beta-defensin 11 (DEFB11) from Bos taurus (Bovine).